We begin with the raw amino-acid sequence, 310 residues long: Methionyl-tRNA formyltransferase (310 aa).

A (6S)-5,6,7,8-tetrahydrofolate-binding site is contributed by 110-113 (SLLP).

This sequence belongs to the Fmt family.

The catalysed reaction is L-methionyl-tRNA(fMet) + (6R)-10-formyltetrahydrofolate = N-formyl-L-methionyl-tRNA(fMet) + (6S)-5,6,7,8-tetrahydrofolate + H(+). Attaches a formyl group to the free amino group of methionyl-tRNA(fMet). The formyl group appears to play a dual role in the initiator identity of N-formylmethionyl-tRNA by promoting its recognition by IF2 and preventing the misappropriation of this tRNA by the elongation apparatus. This chain is Methionyl-tRNA formyltransferase, found in Clostridium acetobutylicum (strain ATCC 824 / DSM 792 / JCM 1419 / IAM 19013 / LMG 5710 / NBRC 13948 / NRRL B-527 / VKM B-1787 / 2291 / W).